The chain runs to 576 residues: Polypeptide N-acetylgalactosaminyltransferase 12 (576 aa).

The Cytoplasmic portion of the chain corresponds to 1–19 (MWGRAVRRRCPRGLRRGRE). Residues 20-37 (ALLALLALAGLGALLRAR) traverse the membrane as a helical; Signal-anchor for type II membrane protein segment. Residues 38–58 (SRSGTVDPGPPRTPLPGRHEP) form a disordered region. Residues 38–576 (SRSGTVDPGP…QRWFFKERMS (539 aa)) are Lumenal-facing. 5 disulfides stabilise this stretch: cysteine 120/cysteine 353, cysteine 344/cysteine 417, cysteine 453/cysteine 474, cysteine 501/cysteine 516, and cysteine 542/cysteine 561. A catalytic subdomain A region spans residues 130–239 (LPKTSVVIAF…EGWLEPLLQR (110 aa)). Substrate contacts are provided by aspartate 171 and arginine 200. Residues aspartate 223 and histidine 225 each contribute to the Mn(2+) site. A catalytic subdomain B region spans residues 299–361 (VIRSPTMAGG…PCSHVGHVFP (63 aa)). Tryptophan 330 contributes to the substrate binding site. Histidine 358 provides a ligand contact to Mn(2+). A substrate-binding site is contributed by tyrosine 366. Residues 440 to 572 (FFGMLQNRGL…NSDNQRWFFK (133 aa)) enclose the Ricin B-type lectin domain.

It belongs to the glycosyltransferase 2 family. GalNAc-T subfamily. It depends on Mn(2+) as a cofactor.

Its subcellular location is the golgi apparatus membrane. The catalysed reaction is L-seryl-[protein] + UDP-N-acetyl-alpha-D-galactosamine = a 3-O-[N-acetyl-alpha-D-galactosaminyl]-L-seryl-[protein] + UDP + H(+). It catalyses the reaction L-threonyl-[protein] + UDP-N-acetyl-alpha-D-galactosamine = a 3-O-[N-acetyl-alpha-D-galactosaminyl]-L-threonyl-[protein] + UDP + H(+). The protein operates within protein modification; protein glycosylation. Functionally, catalyzes the initial reaction in O-linked oligosaccharide biosynthesis, the transfer of an N-acetyl-D-galactosamine residue to a serine or threonine residue on the protein receptor. Has activity toward non-glycosylated peptides such as Muc5AC, Muc1a and EA2, and no detectable activity with Muc2 and Muc7. Displays enzymatic activity toward the Gal-NAc-Muc5AC glycopeptide, but no detectable activity to mono-GalNAc-glycosylated Muc1a, Muc2, Muc7 and EA2. May play an important role in the initial step of mucin-type oligosaccharide biosynthesis in digestive organs. The polypeptide is Polypeptide N-acetylgalactosaminyltransferase 12 (Galnt12) (Mus musculus (Mouse)).